Reading from the N-terminus, the 94-residue chain is Integration host factor subunit beta (94 aa).

Belongs to the bacterial histone-like protein family. As to quaternary structure, heterodimer of an alpha and a beta chain.

This protein is one of the two subunits of integration host factor, a specific DNA-binding protein that functions in genetic recombination as well as in transcriptional and translational control. This Brucella melitensis biotype 2 (strain ATCC 23457) protein is Integration host factor subunit beta.